The primary structure comprises 337 residues: 5-dehydro-2-deoxygluconokinase (337 aa).

This sequence belongs to the carbohydrate kinase PfkB family.

It catalyses the reaction 5-dehydro-2-deoxy-D-gluconate + ATP = 6-phospho-5-dehydro-2-deoxy-D-gluconate + ADP + H(+). It participates in polyol metabolism; myo-inositol degradation into acetyl-CoA; acetyl-CoA from myo-inositol: step 5/7. In terms of biological role, catalyzes the phosphorylation of 5-dehydro-2-deoxy-D-gluconate (2-deoxy-5-keto-D-gluconate or DKG) to 6-phospho-5-dehydro-2-deoxy-D-gluconate (DKGP). The protein is 5-dehydro-2-deoxygluconokinase of Geobacillus thermodenitrificans (strain NG80-2).